The following is a 347-amino-acid chain: Protein pelota homolog (347 aa).

This sequence belongs to the eukaryotic release factor 1 family. Pelota subfamily. In terms of assembly, monomer. Requires a divalent metal cation as cofactor.

The protein resides in the cytoplasm. May function in recognizing stalled ribosomes, interact with stem-loop structures in stalled mRNA molecules, and effect endonucleolytic cleavage of the mRNA. May play a role in the release non-functional ribosomes and degradation of damaged mRNAs. Has endoribonuclease activity. In Methanocaldococcus jannaschii (strain ATCC 43067 / DSM 2661 / JAL-1 / JCM 10045 / NBRC 100440) (Methanococcus jannaschii), this protein is Protein pelota homolog.